We begin with the raw amino-acid sequence, 322 residues long: MGTNKPATLADLQKAINDISKDALSYLTAHKADVVTFAGQIEYAGYDAATLIGILKDKGGDTLAKDMTMCITMRYVRGTGFVRDVTKKVKVAAGSTEASTLVSRYGIVSSVGTNANAITLGRLAQLFPNVSHEVVRQISGVKMAVDSSDLGLTGCDNLLWDYVPQYIKLESETAPYCSTHSLSHILFVVHIIHSFQITKKTMPEGKKKERGLTKDIDMMKYTTGLLVITCKSKNLSDKKKEEGRKKVLDEFITNGKVKTTIFDALAGMSVNTISTYGNQTRLYLAQQSKLMKILAENTSKTATEVSGLVKEFFEDEAEGADD.

RNA contacts are provided by Tyr-43, Tyr-46, Val-76, Arg-122, Lys-240, and Ser-269.

Belongs to the tenuiviruses nucleocapsid protein family.

It is found in the virion. Its subcellular location is the host cytoplasm. In terms of biological role, encapsidates the genome, protecting it from nucleases. The encapsidated genomic RNA is termed the nucleocapsid (NC), and serves as template for viral transcription and replication. The protein is Nucleoprotein of Avena sativa (Oat).